Here is a 536-residue protein sequence, read N- to C-terminus: MDKVGKMWNNFKYRCQNLFGHEGGSRSENVDMNSNRCLSVKEKNISIGDSTPQQQSSPLRENIALQLGLSPSKNSSRRNQNCATEIPQIVEISIEKDNDSCVTPGTRLARRDSYSRHAPWGGKKKHSCSTKTQSSLDADKKFGRTRSGLQRRERRYGVSSVHDMDSVSSRTVGSRSLRQRLQDTVGLCFPMRTYSKQSKPLFSNKRKIHLSELMLEKCPFPAGSDLAQKWHLIKQHTAPVSPHSTFFDTFDPSLVSTEDEEDRLRERRRLSIEEGVDPPPNAQIHTFEATAQVNPLYKLGPKLAPGMTEISGDSSAIPQANCDSEEDTTTLCLQSRRQKQRQISGDSHTHVSRQGAWKVHTQIDYIHCLVPDLLQITGNPCYWGVMDRYEAEALLEGKPEGTFLLRDSAQEDYLFSVSFRRYNRSLHARIEQWNHNFSFDAHDPCVFHSSTVTGLLEHYKDPSSCMFFEPLLTISLNRTFPFSLQYICRAVICRCTTYDGIDGLPLPSMLQDFLKEYHYKQKVRVRWLEREPVKAK.

Residues 1-50 form a required for interaction with IL4R region; that stretch reads MDKVGKMWNNFKYRCQNLFGHEGGSRSENVDMNSNRCLSVKEKNISIGDS. The disordered stretch occupies residues 115 to 175; sequence SRHAPWGGKK…SVSSRTVGSR (61 aa). Positions 158–169 are enriched in low complexity; that stretch reads VSSVHDMDSVSS. One can recognise an SH2 domain in the interval 381–476; sequence CYWGVMDRYE…FFEPLLTISL (96 aa). Positions 471-520 constitute an SOCS box domain; the sequence is LLTISLNRTFPFSLQYICRAVICRCTTYDGIDGLPLPSMLQDFLKEYHYK.

In terms of assembly, interacts with IL4R; inhibits IL4 signaling. Interacts with EGFR. Interacts with ELOB and ELOC; mediates EGFR ubiquitination and degradation. In terms of processing, phosphorylated. Phosphorylation is induced by EGF.

Its pathway is protein modification; protein ubiquitination. Its function is as follows. SOCS family proteins form part of a classical negative feedback system that regulates cytokine signal transduction. May be a substrate-recognition component of a SCF-like ECS (Elongin BC-CUL2/5-SOCS-box protein) E3 ubiquitin-protein ligase complex which mediates the ubiquitination and subsequent proteasomal degradation of target proteins. Inhibits for instance EGF signaling by mediating the degradation of the EGF receptor/EGFR. Involved in the regulation of T-helper cell differentiation by inhibiting of the IL4 signaling pathway which promotes differentiation into the Th2 phenotype. Can also partially inhibit IL6 and LIF signaling. The chain is Suppressor of cytokine signaling 5 (SOCS5) from Homo sapiens (Human).